Reading from the N-terminus, the 546-residue chain is Probable protein kinase UbiB (546 aa).

One can recognise a Protein kinase domain in the interval 124–502 (DFDIKPLASA…QARQGQSRYL (379 aa)). ATP contacts are provided by residues 130–138 (LASASIAQV) and lysine 153. Catalysis depends on aspartate 288, which acts as the Proton acceptor. 2 helical membrane-spanning segments follow: residues 499–519 (SRYL…LLIS) and 521–541 (VEAD…WIIG).

The protein belongs to the ABC1 family. UbiB subfamily.

The protein localises to the cell inner membrane. It functions in the pathway cofactor biosynthesis; ubiquinone biosynthesis [regulation]. In terms of biological role, is probably a protein kinase regulator of UbiI activity which is involved in aerobic coenzyme Q (ubiquinone) biosynthesis. This Pectobacterium carotovorum subsp. carotovorum (strain PC1) protein is Probable protein kinase UbiB.